The chain runs to 862 residues: Phosphofurin acidic cluster sorting protein 2 (862 aa).

Disordered stretches follow at residues 151-215 (HEDS…TTSM), 263-436 (LDVE…TRSQ), and 658-713 (SSAT…SQGV). Over residues 263–272 (LDVENPSDSG) the composition is skewed to low complexity. Residues 313–328 (SHREPPSPADVPEKTR) are compositionally biased toward basic and acidic residues. Residues 332 to 344 (GKQQLSDSVSDTV) are compositionally biased toward polar residues. S361, S387, S424, S662, and S665 each carry phosphoserine. Composition is skewed to low complexity over residues 658–693 (SSAT…KEAS) and 700–710 (PSVSGGLSSPS).

This sequence belongs to the PACS family. As to quaternary structure, interacts with BID and PKD2. Interacts with SIRT1. Interacts with HDAC1. Interacts with TRPV1. Interacts with WDR37.

The protein resides in the endoplasmic reticulum. Its subcellular location is the mitochondrion. Multifunctional sorting protein that controls the endoplasmic reticulum (ER)-mitochondria communication, including the apposition of mitochondria with the ER and ER homeostasis. In addition, in response to apoptotic inducer, translocates BIB to mitochondria, which initiates a sequence of events including the formation of mitochondrial truncated BID, the release of cytochrome c, the activation of caspase-3 thereby causing cell death. May also involved in ion channel trafficking, directing acidic cluster-containing ion channels to distinct subcellular compartments. This is Phosphofurin acidic cluster sorting protein 2 (Pacs2) from Mus musculus (Mouse).